The sequence spans 261 residues: 1-(5-phosphoribosyl)-5-[(5-phosphoribosylamino)methylideneamino] imidazole-4-carboxamide isomerase (261 aa).

The Proton acceptor role is filled by Asp-15. Asp-136 functions as the Proton donor in the catalytic mechanism.

The protein belongs to the HisA/HisF family.

It localises to the cytoplasm. It carries out the reaction 1-(5-phospho-beta-D-ribosyl)-5-[(5-phospho-beta-D-ribosylamino)methylideneamino]imidazole-4-carboxamide = 5-[(5-phospho-1-deoxy-D-ribulos-1-ylimino)methylamino]-1-(5-phospho-beta-D-ribosyl)imidazole-4-carboxamide. It participates in amino-acid biosynthesis; L-histidine biosynthesis; L-histidine from 5-phospho-alpha-D-ribose 1-diphosphate: step 4/9. This is 1-(5-phosphoribosyl)-5-[(5-phosphoribosylamino)methylideneamino] imidazole-4-carboxamide isomerase from Synechococcus sp. (strain JA-3-3Ab) (Cyanobacteria bacterium Yellowstone A-Prime).